The following is an 854-amino-acid chain: Arsenate respiratory reductase molybdopterin-containing subunit ArrA (854 aa).

Positions 1–41 (MKKENQVNLGRRQLLKSTAAGTVLTGIGGTLSFTPIVEGIA) form a signal peptide, tat-type signal. Positions 54–110 (GEWLATTCQGCTSWCAKQIYVMDGRALKVRGNPNSGVHGMSSCPRQHLSLQQVYDPD) constitute a 4Fe-4S Mo/W bis-MGD-type domain. Residues cysteine 61, cysteine 64, cysteine 68, and cysteine 96 each coordinate [4Fe-4S] cluster. Arginine 165 contributes to the arsenite binding site. Tyrosine 166 serves as a coordination point for arsenate. An arsenite-binding site is contributed by histidine 189. An arsenate-binding site is contributed by serine 190. Cysteine 193 provides a ligand contact to Mo-bis(molybdopterin guanine dinucleotide). Lysine 198 lines the arsenate pocket. Tyrosine 210 is an arsenite binding site.

This sequence belongs to the prokaryotic molybdopterin-containing oxidoreductase family. As to quaternary structure, heterodimer composed of one large subunit (ArrA) and one small subunit (ArrB). The cofactor is [4Fe-4S] cluster. Requires Mo-bis(molybdopterin guanine dinucleotide) as cofactor. In terms of processing, predicted to be exported by the Tat system. The position of the signal peptide cleavage has not been experimentally proven.

It is found in the periplasm. The enzyme catalyses arsenite + A + H2O = arsenate + AH2 + H(+). With respect to regulation, phosphate is a competitive inhibitor. Its function is as follows. Component of the arsenate respiratory reductase (Arr) complex, which catalyzes the reduction of arsenate (As(V)) to arsenite (As(III)). ArrA is the arsenate-binding subunit. The periplasmic localization of this complex may allow the cell to couple arsenate reduction to energy production before arsenate can be transported to the cell cytoplasm and enter the ars detoxification pathway, an energy-requiring process. This Shewanella sp. (strain ANA-3) protein is Arsenate respiratory reductase molybdopterin-containing subunit ArrA.